The chain runs to 313 residues: Iron-sulfur protein required for NADH dehydrogenase, mitochondrial (313 aa).

The N-terminal 22 residues, 1-22 (MATVALLRSLRRRELHAAHISA), are a transit peptide targeting the mitochondrion. 51-58 (GKGGVGKS) contacts ATP.

Belongs to the Mrp/NBP35 ATP-binding proteins family. Requires [4Fe-4S] cluster as cofactor.

The protein resides in the mitochondrion matrix. In terms of biological role, essential during early vegetative growth. Required for the assembly of the mitochondrial membrane respiratory chain NADH dehydrogenase (Complex I). Involved in mitochondrial translation activity. May deliver of one or more Fe-S clusters to complex I subunits. In Arabidopsis thaliana (Mouse-ear cress), this protein is Iron-sulfur protein required for NADH dehydrogenase, mitochondrial.